Here is an 862-residue protein sequence, read N- to C-terminus: Ecdysone-induced protein 78C (862 aa).

Disordered stretches follow at residues Ser28–Leu83, Leu97–His138, Ala173–Thr210, and Ala230–Asn353. The span at Lys37–Thr46 shows a compositional bias: basic and acidic residues. The segment covering Arg47–Ala82 has biased composition (acidic residues). Over residues Asp105–Glu119 the composition is skewed to polar residues. Composition is skewed to low complexity over residues Ala173–Gln206, Ala230–Val291, Gln308–Gln335, and Ser342–Asn353. A DNA-binding region (nuclear receptor) is located at residues Phe360 to Tyr435. NR C4-type zinc fingers lie at residues Cys363 to Cys383 and Cys399 to Cys418. The interval Glu444–Ser557 is disordered. Over residues Gly447–Ser460 the composition is skewed to low complexity. The span at Val463 to His472 shows a compositional bias: polar residues. The segment covering His475–His508 has biased composition (low complexity). Over residues Thr516–Ser533 the composition is skewed to polar residues. Over residues Asn539 to Asn555 the composition is skewed to low complexity. The 230-residue stretch at Tyr626–Ile855 folds into the NR LBD domain.

It belongs to the nuclear hormone receptor family. NR1 subfamily.

It localises to the nucleus. Induces the early late puff 78C which triggers puparium formation and development. In Drosophila melanogaster (Fruit fly), this protein is Ecdysone-induced protein 78C (Eip78C).